The following is an 83-amino-acid chain: Cytochrome b559 subunit alpha (83 aa).

The chain crosses the membrane as a helical span at residues 21 to 35 (VIHSITIPSLFIAGW). His-23 is a binding site for heme.

The protein belongs to the PsbE/PsbF family. Heterodimer of an alpha subunit and a beta subunit. PSII is composed of 1 copy each of membrane proteins PsbA, PsbB, PsbC, PsbD, PsbE, PsbF, PsbH, PsbI, PsbJ, PsbK, PsbL, PsbM, PsbT, PsbX, PsbY, PsbZ, Psb30/Ycf12, at least 3 peripheral proteins of the oxygen-evolving complex and a large number of cofactors. It forms dimeric complexes. Requires heme b as cofactor.

It localises to the plastid. The protein localises to the chloroplast thylakoid membrane. Functionally, this b-type cytochrome is tightly associated with the reaction center of photosystem II (PSII). PSII is a light-driven water:plastoquinone oxidoreductase that uses light energy to abstract electrons from H(2)O, generating O(2) and a proton gradient subsequently used for ATP formation. It consists of a core antenna complex that captures photons, and an electron transfer chain that converts photonic excitation into a charge separation. The chain is Cytochrome b559 subunit alpha from Chaetosphaeridium globosum (Charophycean green alga).